The primary structure comprises 862 residues: Interleukin-12 receptor subunit beta-2 (862 aa).

An N-terminal signal peptide occupies residues 1-23 (MAHTFRGCSLAFMFIITWLLIKA). Over 24–622 (KIDACKRGDV…REFCLQGKAN (599 aa)) the chain is Extracellular. 5 N-linked (GlcNAc...) asparagine glycosylation sites follow: Asn48, Asn129, Asn166, Asn195, and Asn271. 5 Fibronectin type-III domains span residues 126–221 (QPQN…FLDI), 226–319 (PPWD…TPEE), 320–419 (EPTG…LCEA), 423–520 (APRQ…KHKA), and 521–620 (PLSG…LQGK). Positions 305 to 309 (WSDWS) match the WSXWS motif motif. 3 N-linked (GlcNAc...) asparagine glycosylation sites follow: Asn347, Asn376, and Asn480. Residues 623–643 (WMAFVAPSICIAIIMVGIFST) form a helical membrane-spanning segment. Residues 644–862 (HYFQQKVFVL…LKMRCDSLML (219 aa)) lie on the Cytoplasmic side of the membrane. A Box 1 motif motif is present at residues 662–670 (CSREIPDPA). Positions 725-755 (NWPQREKGIQGHQASEKDMMHSASSPPPPRA) are disordered. The segment covering 728-744 (QREKGIQGHQASEKDMM) has biased composition (basic and acidic residues). The interval 796–801 (THDGYL) is required for STAT4 binding. Tyr800 carries the post-translational modification Phosphotyrosine.

The protein belongs to the type I cytokine receptor family. Type 2 subfamily. Heterodimer/heterooligomer; disulfide-linked. The functional high affinity IL12 receptor is composed of I12RB1 and IL12RB2. Il12RB2 binds JAK2 (via its N-terminal) through a membrane-proximal region of the cytoplasmic domain. Interaction, in vitro and in vivo, with SOCS3 (via its SH2 domain) inhibits the STAT4-mediated activation. Binds STAT4 through a membrane-distal C-terminal region. On IL12 binding, phosphorylated on C-terminal tyrosine residues by JAK2. Phosphorylation on Tyr-800 is required for STAT4 binding and activation, and for SOCS3 binding. In terms of tissue distribution, isoform 2 is expressed at similar levels in both naive and activated T-cells.

It localises to the membrane. Its function is as follows. Receptor for interleukin-12. This subunit is the signaling component coupling to the JAK2/STAT4 pathway. Promotes the proliferation of T-cells as well as NK cells. Induces the promotion of T-cells towards the Th1 phenotype by strongly enhancing IFN-gamma production. The sequence is that of Interleukin-12 receptor subunit beta-2 (IL12RB2) from Homo sapiens (Human).